A 1142-amino-acid polypeptide reads, in one-letter code: MASMKQQQTPASSAVTAAAAASSSATAAVAACEGERKAAAINSELWHACAGPLVSLPPVGSLVVYFPQGHSEQVAASMQKDVDAHVPSYPNLPSKLICLLHGVNLHADPDTDEVYAQMTLQPVNTYGKEALQISELALKQARPQMEFFCKTLTASDTSTHGGFSVPRRAAEKIFPPLDFSMQPPAQELQARDIHDNVWTFRHIYRGQPKRHLLTTGWSLFVSGKRLFAGDSVIVVRDEKHQLLLGIRRANRQPTNISSSVLSSDSMHIGVLAAAAHAAANSSPFTIFYNPRASPTEFVIPFAKYQKALYSNQISLGMRFRMMFETEELGTRRYMGTITGISDLDPVRWKNSQWRNLQVGWDESAAGERRNRVSIWEIEPVAAPFFLCPQPFFGVKRPRQLDDESEMENLFKRAMPWLGEEVCIKDTQNQNSTAPGLSLVQWMNMNRQQSSSLANTAAQSEYLQALGNPAMQNLAADELARQLYVQNNLLQQNCIQFNSPKLPQQMQTMNDLSKAAIPLNQLGAIINPQDQKQDAVNHQRQQNSIQVIPLSQAQSNLVQAQVIVQNQMQQQKPSPTQNPQRINGQRLLLSHQQKDQNLQLQQQLLLQQKQQLQQQQQQQQQNQQQLNKSLGQLVNLASQQSKLFDEELQLQILQKLQQQSLMSQSTSTLSQPPLIQEQQKLITDMQKQLSNSHSLAQQQMMPQQEIKPSLQATPLLPTVQQEQQQKLLQKQVSLADVSGVAFQPISSTNVIPKTGGAMIISGATQSVVTEEMPSCSTSPSTANGNHFTQSTKNRHCINTERLPPSTAPMLIPTSIDAVTATPLMTKELPKPNNNVKQSVVNSKLPNVAPGPQNCINHALQTDNLETSSSATSLCPSRTDGLVHQGFPSSNFNQHQMFKDALPDVEMEGVDPSNSGLFGINNDNLLGFPIETEDLLINALDSVKYQNHISTDVENNYPMQKDALQEISTSMVSQSFGQSDMAFNSIDSAINDGAFLNKNSWPAAPLLQRMRTFTKVYKRGAVGRSIDIGRYSGYEELKHALARMFGIEGQLEDRQRIGWKLVYKDHEDDILLLGDDPWEEFVNCVRCIRILSPQEVQQMSLDGDLGSNVLPNQACSSSDGVNGWRPRCDQNPGNPSIGPYDQFE.

Residues 148 to 250 (FCKTLTASDT…QLLLGIRRAN (103 aa)) constitute a DNA-binding region (TF-B3). In terms of domain architecture, PB1 spans 1009 to 1093 (RTFTKVYKRG…RCIRILSPQE (85 aa)). The segment at 1114–1142 (SSSDGVNGWRPRCDQNPGNPSIGPYDQFE) is disordered.

It belongs to the ARF family. As to quaternary structure, homodimers and heterodimers. As to expression, expressed in roots, culms, leaves and young panicles.

The protein resides in the nucleus. Auxin response factors (ARFs) are transcriptional factors that bind specifically to the DNA sequence 5'-TGTCTC-3' found in the auxin-responsive promoter elements (AuxREs). In Oryza sativa subsp. japonica (Rice), this protein is Auxin response factor 5 (ARF5).